The following is a 329-amino-acid chain: MQGSVTEFLKPRLVDIEQVSSTHAKVTLEPLERGFGHTLGNALRRILLSSMPGCAVTEVEIDGVLHEYSTKEGVQEDILEILLNLKGLAVRVQGKDEVILTLNKSGIGPVTAADITHDGDVEIVKPQHVICHLTDENASISMRIKVQRGRGYVPASTRIHSEEDERPIGRLLVDACYSPVERIAYNVEAARVEQRTDLDKLVIEMETNGTIDPEEAIRRAATILAEQLEAFVDLRDVRQPEVKEEKPEFDPILLRPVDDLELTVRSANCLKAEAIHYIGDLVQRTEVELLKTPNLGKKSLTEIKDVLASRGLSLGMRLEDWPPASIADE.

The tract at residues 1-235 is alpha N-terminal domain (alpha-NTD); the sequence is MQGSVTEFLK…EQLEAFVDLR (235 aa). Positions 249–329 are alpha C-terminal domain (alpha-CTD); that stretch reads FDPILLRPVD…DWPPASIADE (81 aa).

It belongs to the RNA polymerase alpha chain family. Homodimer. The RNAP catalytic core consists of 2 alpha, 1 beta, 1 beta' and 1 omega subunit. When a sigma factor is associated with the core the holoenzyme is formed, which can initiate transcription.

The enzyme catalyses RNA(n) + a ribonucleoside 5'-triphosphate = RNA(n+1) + diphosphate. DNA-dependent RNA polymerase catalyzes the transcription of DNA into RNA using the four ribonucleoside triphosphates as substrates. The polypeptide is DNA-directed RNA polymerase subunit alpha (Salmonella choleraesuis (strain SC-B67)).